A 484-amino-acid chain; its full sequence is Chromosomal replication initiator protein DnaA (484 aa).

Residues 1-73 form a domain I, interacts with DnaA modulators region; that stretch reads MQEGKNIWSL…EILTEKGHNT (73 aa). A domain II region spans residues 73–140; the sequence is TINVEFINPP…EDIHTKYRNP (68 aa). The segment at 141–357 is domain III, AAA+ region; sequence FLKKKYTFEN…AAVTKLKAHI (217 aa). ATP is bound by residues G185, G187, K188, and T189. Residues 358–484 form a domain IV, binds dsDNA region; it reads DLEDIEIDTS…IELMNKINKN (127 aa).

Belongs to the DnaA family. As to quaternary structure, oligomerizes as a right-handed, spiral filament on DNA at oriC.

The protein localises to the cytoplasm. Plays an essential role in the initiation and regulation of chromosomal replication. ATP-DnaA binds to the origin of replication (oriC) to initiate formation of the DNA replication initiation complex once per cell cycle. Binds the DnaA box (a 9 base pair repeat at the origin) and separates the double-stranded (ds)DNA. Forms a right-handed helical filament on oriC DNA; dsDNA binds to the exterior of the filament while single-stranded (ss)DNA is stabiized in the filament's interior. The ATP-DnaA-oriC complex binds and stabilizes one strand of the AT-rich DNA unwinding element (DUE), permitting loading of DNA polymerase. After initiation quickly degrades to an ADP-DnaA complex that is not apt for DNA replication. Binds acidic phospholipids. The protein is Chromosomal replication initiator protein DnaA of Borrelia turicatae (strain 91E135).